The following is a 196-amino-acid chain: GTP cyclohydrolase-2 (196 aa).

49–53 (RVHSE) lines the GTP pocket. Residues Cys-54, Cys-65, and Cys-67 each contribute to the Zn(2+) site. Residues Gln-70, 92-94 (EGR), and Thr-114 contribute to the GTP site. Asp-126 acts as the Proton acceptor in catalysis. Catalysis depends on Arg-128, which acts as the Nucleophile. Residues Thr-149 and Lys-154 each coordinate GTP.

The protein belongs to the GTP cyclohydrolase II family. Homodimer. The cofactor is Zn(2+).

The catalysed reaction is GTP + 4 H2O = 2,5-diamino-6-hydroxy-4-(5-phosphoribosylamino)-pyrimidine + formate + 2 phosphate + 3 H(+). The protein operates within cofactor biosynthesis; riboflavin biosynthesis; 5-amino-6-(D-ribitylamino)uracil from GTP: step 1/4. Functionally, catalyzes the conversion of GTP to 2,5-diamino-6-ribosylamino-4(3H)-pyrimidinone 5'-phosphate (DARP), formate and pyrophosphate. The chain is GTP cyclohydrolase-2 from Salmonella choleraesuis (strain SC-B67).